Reading from the N-terminus, the 192-residue chain is Thiol-disulfide oxidoreductase ResA (192 aa).

A helical; Signal-anchor for type II membrane protein transmembrane segment spans residues 22 to 41 (SSILLILVAAVVFAIVSNMK). Positions 47 to 189 (YRVGDAAPDF…LEGYLNDIAP (143 aa)) constitute a Thioredoxin domain. A disulfide bridge links Cys-89 with Cys-92.

The protein belongs to the thioredoxin family. ResA subfamily.

It is found in the cell membrane. The protein operates within protein modification; cytochrome c assembly. Thiol-disulfide oxidoreductase which is required in disulfide reduction during c-type cytochrome synthesis. May accept reducing equivalents from CcdA, leading to breakage of disulfide bonds in apocytochrome c; following this reduction heme can be covalently attached. The polypeptide is Thiol-disulfide oxidoreductase ResA (Oceanobacillus iheyensis (strain DSM 14371 / CIP 107618 / JCM 11309 / KCTC 3954 / HTE831)).